The sequence spans 389 residues: Protein P4 (389 aa).

The polypeptide is Protein P4 (Rice tungro bacilliform virus (isolate Philippines) (RTBV)).